Consider the following 1151-residue polypeptide: Error-prone DNA polymerase (1151 aa).

The interval 1108–1151 (HPVPSGDALIEPLNDDRRDHADAPAQKIRHPRNVRILPPSRDFH) is disordered.

It belongs to the DNA polymerase type-C family. DnaE2 subfamily.

The protein resides in the cytoplasm. The enzyme catalyses DNA(n) + a 2'-deoxyribonucleoside 5'-triphosphate = DNA(n+1) + diphosphate. Functionally, DNA polymerase involved in damage-induced mutagenesis and translesion synthesis (TLS). It is not the major replicative DNA polymerase. This chain is Error-prone DNA polymerase, found in Bradyrhizobium diazoefficiens (strain JCM 10833 / BCRC 13528 / IAM 13628 / NBRC 14792 / USDA 110).